The primary structure comprises 443 residues: 3-phosphoshikimate 1-carboxyvinyltransferase (443 aa).

The tract at residues 1–22 (MSHASRPTPLEARGSTPLTGRV) is disordered. The 3-phosphoshikimate site is built by Lys-28, Ser-29, and Arg-33. Lys-28 serves as a coordination point for phosphoenolpyruvate. Positions 101 and 129 each coordinate phosphoenolpyruvate. 4 residues coordinate 3-phosphoshikimate: Ser-174, Gln-176, Asp-326, and Lys-353. Position 176 (Gln-176) interacts with phosphoenolpyruvate. Asp-326 acts as the Proton acceptor in catalysis. Phosphoenolpyruvate-binding residues include Arg-357 and Arg-400.

The protein belongs to the EPSP synthase family. In terms of assembly, monomer.

It is found in the cytoplasm. It carries out the reaction 3-phosphoshikimate + phosphoenolpyruvate = 5-O-(1-carboxyvinyl)-3-phosphoshikimate + phosphate. Its pathway is metabolic intermediate biosynthesis; chorismate biosynthesis; chorismate from D-erythrose 4-phosphate and phosphoenolpyruvate: step 6/7. Functionally, catalyzes the transfer of the enolpyruvyl moiety of phosphoenolpyruvate (PEP) to the 5-hydroxyl of shikimate-3-phosphate (S3P) to produce enolpyruvyl shikimate-3-phosphate and inorganic phosphate. The polypeptide is 3-phosphoshikimate 1-carboxyvinyltransferase (Afipia carboxidovorans (strain ATCC 49405 / DSM 1227 / KCTC 32145 / OM5) (Oligotropha carboxidovorans)).